The following is a 372-amino-acid chain: Chaperone protein DnaJ (372 aa).

Residues 5–69 (DYYEVLGVSK…DKRKQYDQFG (65 aa)) enclose the J domain. The segment at 139-221 (GVDKIIELDL…CKGKGKYLER (83 aa)) adopts a CR-type zinc-finger fold. Residues C152, C155, C169, C172, C195, C198, C209, and C212 each contribute to the Zn(2+) site. CXXCXGXG motif repeat units lie at residues 152–159 (CSACFGSG), 169–176 (CNNCHGTG), 195–202 (CNVCNGAG), and 209–216 (CKNCKGKG).

It belongs to the DnaJ family. In terms of assembly, homodimer. The cofactor is Zn(2+).

It is found in the cytoplasm. Its function is as follows. Participates actively in the response to hyperosmotic and heat shock by preventing the aggregation of stress-denatured proteins and by disaggregating proteins, also in an autonomous, DnaK-independent fashion. Unfolded proteins bind initially to DnaJ; upon interaction with the DnaJ-bound protein, DnaK hydrolyzes its bound ATP, resulting in the formation of a stable complex. GrpE releases ADP from DnaK; ATP binding to DnaK triggers the release of the substrate protein, thus completing the reaction cycle. Several rounds of ATP-dependent interactions between DnaJ, DnaK and GrpE are required for fully efficient folding. Also involved, together with DnaK and GrpE, in the DNA replication of plasmids through activation of initiation proteins. This chain is Chaperone protein DnaJ, found in Mycoplasma capricolum subsp. capricolum (strain California kid / ATCC 27343 / NCTC 10154).